Consider the following 882-residue polypeptide: Alanine--tRNA ligase (882 aa).

Zn(2+) contacts are provided by His-563, His-567, Cys-665, and His-669.

This sequence belongs to the class-II aminoacyl-tRNA synthetase family. Zn(2+) serves as cofactor.

It is found in the cytoplasm. It catalyses the reaction tRNA(Ala) + L-alanine + ATP = L-alanyl-tRNA(Ala) + AMP + diphosphate. Catalyzes the attachment of alanine to tRNA(Ala) in a two-step reaction: alanine is first activated by ATP to form Ala-AMP and then transferred to the acceptor end of tRNA(Ala). Also edits incorrectly charged Ser-tRNA(Ala) and Gly-tRNA(Ala) via its editing domain. The sequence is that of Alanine--tRNA ligase from Synechococcus sp. (strain RCC307).